We begin with the raw amino-acid sequence, 448 residues long: UDP-glucose 6-dehydrogenase (448 aa).

Residues Asn-2–Met-19, Val-11, Asp-30, Lys-35, Thr-121, and Glu-152 each bind NAD(+). Substrate is bound by residues Glu-148–Glu-152, Lys-204, Asn-208, Phe-249–Gly-253, and Gly-257. Cys-260 functions as the Nucleophile in the catalytic mechanism. NAD(+) is bound at residue Lys-263. Lys-321 contributes to the substrate binding site. NAD(+) is bound at residue Arg-328.

The protein belongs to the UDP-glucose/GDP-mannose dehydrogenase family.

It catalyses the reaction UDP-alpha-D-glucose + 2 NAD(+) + H2O = UDP-alpha-D-glucuronate + 2 NADH + 3 H(+). It participates in nucleotide-sugar biosynthesis; UDP-alpha-D-glucuronate biosynthesis; UDP-alpha-D-glucuronate from UDP-alpha-D-glucose: step 1/1. This chain is UDP-glucose 6-dehydrogenase (udg), found in Rickettsia felis (strain ATCC VR-1525 / URRWXCal2) (Rickettsia azadi).